We begin with the raw amino-acid sequence, 151 residues long: FAD synthase (151 aa).

ATP is bound by residues 21–22 (TF), 26–29 (HPGH), and Asp104.

It belongs to the archaeal FAD synthase family. In terms of assembly, homodimer. It depends on a divalent metal cation as a cofactor.

The catalysed reaction is FMN + ATP + H(+) = FAD + diphosphate. It participates in cofactor biosynthesis; FAD biosynthesis; FAD from FMN: step 1/1. Functionally, catalyzes the transfer of the AMP portion of ATP to flavin mononucleotide (FMN) to produce flavin adenine dinucleotide (FAD) coenzyme. The protein is FAD synthase of Methanosarcina mazei (strain ATCC BAA-159 / DSM 3647 / Goe1 / Go1 / JCM 11833 / OCM 88) (Methanosarcina frisia).